Consider the following 50-residue polypeptide: Penaeidin-1 (50 aa).

3 disulfide bridges follow: cysteine 25/cysteine 38, cysteine 27/cysteine 45, and cysteine 39/cysteine 46.

Higher expression in hemocytes and to a lesser extent in heart, testis, gills, intestine, lymphoid organ and hepatopancreas. Traces in eyes and subcuticular epithelium. Not present in the brain.

Its subcellular location is the cytoplasmic granule. Functionally, antibacterial activity against M.luteus and E.coli bacteria. Antifungal activity against N.crassa and F.oxysporum. Presents chitin-binding activity. This chain is Penaeidin-1, found in Penaeus vannamei (Whiteleg shrimp).